A 123-amino-acid polypeptide reads, in one-letter code: Large ribosomal subunit protein uL14 (123 aa).

This sequence belongs to the universal ribosomal protein uL14 family. As to quaternary structure, part of the 50S ribosomal subunit. Forms a cluster with proteins L3 and L19. In the 70S ribosome, L14 and L19 interact and together make contacts with the 16S rRNA in bridges B5 and B8.

In terms of biological role, binds to 23S rRNA. Forms part of two intersubunit bridges in the 70S ribosome. This is Large ribosomal subunit protein uL14 from Proteus mirabilis (strain HI4320).